Here is a 105-residue protein sequence, read N- to C-terminus: uncharacterized protein (105 aa).

The first 24 residues, 1-24, serve as a signal peptide directing secretion; sequence MYWPCLVITPFTVGESFCLLLSLG.

This is an uncharacterized protein from Saccharomyces cerevisiae (strain ATCC 204508 / S288c) (Baker's yeast).